We begin with the raw amino-acid sequence, 572 residues long: Proline--tRNA ligase (572 aa).

This sequence belongs to the class-II aminoacyl-tRNA synthetase family. ProS type 1 subfamily. In terms of assembly, homodimer.

The protein resides in the cytoplasm. It catalyses the reaction tRNA(Pro) + L-proline + ATP = L-prolyl-tRNA(Pro) + AMP + diphosphate. Catalyzes the attachment of proline to tRNA(Pro) in a two-step reaction: proline is first activated by ATP to form Pro-AMP and then transferred to the acceptor end of tRNA(Pro). As ProRS can inadvertently accommodate and process non-cognate amino acids such as alanine and cysteine, to avoid such errors it has two additional distinct editing activities against alanine. One activity is designated as 'pretransfer' editing and involves the tRNA(Pro)-independent hydrolysis of activated Ala-AMP. The other activity is designated 'posttransfer' editing and involves deacylation of mischarged Ala-tRNA(Pro). The misacylated Cys-tRNA(Pro) is not edited by ProRS. This chain is Proline--tRNA ligase, found in Buchnera aphidicola subsp. Acyrthosiphon pisum (strain APS) (Acyrthosiphon pisum symbiotic bacterium).